Here is a 477-residue protein sequence, read N- to C-terminus: MVSAISEDSASATASGQCEVVKEELPAGNYILVAVEIDTTGRRLIDEIVQLAGYTSKGNFQQYIMPYMNLNQAARQRHQIRVISIGFYRMLKSMQTYKIIKSKSEVAALMDFLNWLETLLAKQPNKEGIVMLYHDDRKFIPYMILEALKKYSLIDRFNRSVKAFANTCPMAKTFLGKHGIKNCGLRKLSMLLAKSKDGNSTKEDEHENPEGNSSITDNSGHKNQKQGAFEGSANVRAKMVYEMALQLIESESTESPESFESPESSESSEAEVKLLNAVRPFSQLLSSTILELKDQNHSLGRQNSFRPVFLNYFRTTLNYRVRAVKYRIGLAEHGFTLKSLKAIWSDKRKPGLELVLTAIDSLKTEETAELLDLLDSYYDPSKTTIKPRCKRSGNGTRRRNRAKGAASSKNGAIGAGGDNSVPDSATKPGGRPRRKRNNIRNNILGPQNTEKGSPKAEMKTSTPKSMSIKPPSEFADI.

The segment covering 196-209 has biased composition (basic and acidic residues); it reads KDGNSTKEDEHENP. Disordered regions lie at residues 196 to 226 and 384 to 477; these read KDGNSTKEDEHENPEGNSSITDNSGHKNQKQ and TIKP…FADI. The span at 385 to 402 shows a compositional bias: basic residues; sequence IKPRCKRSGNGTRRRNRA.

In terms of biological role, ensures the proper localization of the mRNA of the bicoid gene to the anterior regions of the oocyte thus playing a fundamental role in the establishment of the polarity of the oocyte. May bind the bcd mRNA. The protein is Maternal protein exuperantia-2 (exu2) of Drosophila pseudoobscura pseudoobscura (Fruit fly).